Reading from the N-terminus, the 728-residue chain is MEYRYSYVIDPSSYDNQGLCNGIPLRVHRNADIEEYATISLRNDWRKHVGPLPLTSYGGNLGPKYNFTAVTLPECRPDRLEIVSYIMEFAFLHDDLVDTAQVDEALALNDTWRDGITEGLDTTSAKGKKSGEGLILRNILKEVTAIDPVRAAELMKFWKRDLDVSRDRKHFRDFDDYMEYRIVDCASYFLIALSTFAMALTIPAEDKDEVFTLLTRPVWAAAALTNDVQSWEKEDKLFQKDNATDMTNGVWMLMKQYSIGVEEAKRRILGKAREHVAEFVKTLSQIHNRLDLSLDSRLFVEAMQYMISGNLMWGISTPRYHSDQSLDEMMVARMKYGWPNHREVTKLTSDLENRGTKRTHQDDTEGVQSVKRFNGASTKNGINGTNGINGLNGINGSNGVKIKRHKNKEYSGALTKDSDLVLNMDLNGLSSAIICAPADYIGSLPSKGIRDNVADALSIWLDVPAKELNQIKRAINLLHNASLMLDDVQDGSVLRRAQPTTHTVFGPAQTINSAGHQIIQAMNEIRKLGSDDCLDIFSEELEKLYVGQSHDLYWVYNDSCSPTIEDYFKMVDYKTGGLFNMLARLMTAKSSSSSSPDLTALVGLLGRYFQIRDDYMNLTSADYTVEKGFCEDLDEGKFSITLLHALSAAPEPEALLLRNLMSGRRNDGKLSVVQKNLALSIIEGARSLEYTAAVLQKLYKAIVRELESTERQFGENKPFRFLLSLLKV.

The terpene cyclase stretch occupies residues 1 to 327; the sequence is MEYRYSYVID…PRYHSDQSLD (327 aa). Mg(2+) is bound by residues D94 and D98. Residues D94, D98, 181–184, N226, 230–234, and 319–320 contribute to the substrate site; these read RIVD, SWEKE, and RY. Residues 94-98 carry the DDXXD 1 motif; it reads DDLVD. The short motif at 226–234 is the NSE/DTE element; it reads NDVQSWEKE. A prenyltransferase region spans residues 328–728; that stretch reads EMMVARMKYG…FRFLLSLLKV (401 aa). The segment covering 352 to 363 has biased composition (basic and acidic residues); the sequence is ENRGTKRTHQDD. The interval 352 to 379 is disordered; it reads ENRGTKRTHQDDTEGVQSVKRFNGASTK. 3 consecutive repeat copies span residues 381-386, 387-392, and 393-398. Positions 381–398 are 3 X 6 AA approximate tandem repeats; sequence GINGTNGINGLNGINGSN. Isopentenyl diphosphate-binding residues include K447, R450, and H479. Residues D486 and D490 each contribute to the Mg(2+) site. Positions 486 to 490 match the DDXXD 2 motif; it reads DDVQD. R495 provides a ligand contact to dimethylallyl diphosphate. R496 contacts isopentenyl diphosphate. Residues K574, T575, Q610, N617, K627, and K637 each contribute to the dimethylallyl diphosphate site.

This sequence in the N-terminal section; belongs to the terpene synthase family. The protein in the C-terminal section; belongs to the FPP/GGPP synthase family. In terms of assembly, hexamer. Mg(2+) serves as cofactor.

It carries out the reaction isopentenyl diphosphate + (2E,6E)-farnesyl diphosphate = (2E,6E,10E)-geranylgeranyl diphosphate + diphosphate. It functions in the pathway secondary metabolite biosynthesis; terpenoid biosynthesis. In terms of biological role, bifunctional terpene synthase; part of the gene cluster that mediates the biosynthesis of the diterpene methyl phomopsenonate. At first, the universal precursor of diterpene, geranylgeranyl diphosphate (GGPP) is provided and is cyclized by the unusual bifunctional terpene synthase PaPS to give phomopsene. The C-terminal prenyltransferase domain of PaPS catalyzes formation of GGPP, whereas the N-terminal terpene cyclase domain catalyzes the cyclization of GGPP to phomopsene. Since the oxidation of a methylgroup to a carboxyl group is frequently catalyzed by a cytochrome P450 monooxygenase, the C-16 methyl group would be oxidized by the cluster-specific cytochrome P450 monooxygenase ORF3. Subsequently, oxidation of the allylic position and methylation of the carboxyl group may give methyl phomopsenonate. Although further study is necessary to identify genes such as a monooxygenase and a methyltransferase, the predicted functions of genes on the cluster are correlated with the structure of methyl phomopsenonate. In Phomopsis amygdali (Fusicoccum amygdali), this protein is Phomopsene synthase.